The primary structure comprises 176 residues: MSAPRLIARHYHGHPHDESPRDCVVLDYDARFLRRKVLTCESGERLLVDLSHTTSLDHDGVLLLEGGGEIRVVAAPEPLLEVTADHLPRMAWHIGNRHTPCQIEASRLLIQRDHVIRAMLEQLGAQLREVEEPFTPEGGAYGHGRTHAHEHGHTNHHGQHHDHADHGHSHDHSHDQ.

The interval Phe-134–Gln-176 is disordered. The segment covering His-161–Gln-176 has biased composition (basic and acidic residues).

The protein belongs to the UreE family.

It localises to the cytoplasm. Its function is as follows. Involved in urease metallocenter assembly. Binds nickel. Probably functions as a nickel donor during metallocenter assembly. In Ruegeria sp. (strain TM1040) (Silicibacter sp.), this protein is Urease accessory protein UreE.